Here is a 181-residue protein sequence, read N- to C-terminus: CDP-archaeol synthase (181 aa).

A run of 5 helical transmembrane segments spans residues 7–27 (VVVA…AVLA), 55–75 (AVGT…RPAA), 80–100 (GVVL…GAMV), 128–148 (FVVV…GDTF), and 150–170 (LPVL…TNGI).

The protein belongs to the CDP-archaeol synthase family. Requires Mg(2+) as cofactor.

It localises to the cell membrane. The catalysed reaction is 2,3-bis-O-(geranylgeranyl)-sn-glycerol 1-phosphate + CTP + H(+) = CDP-2,3-bis-O-(geranylgeranyl)-sn-glycerol + diphosphate. It functions in the pathway membrane lipid metabolism; glycerophospholipid metabolism. Functionally, catalyzes the formation of CDP-2,3-bis-(O-geranylgeranyl)-sn-glycerol (CDP-archaeol) from 2,3-bis-(O-geranylgeranyl)-sn-glycerol 1-phosphate (DGGGP) and CTP. This reaction is the third ether-bond-formation step in the biosynthesis of archaeal membrane lipids. The polypeptide is CDP-archaeol synthase (Halobacterium salinarum (strain ATCC 29341 / DSM 671 / R1)).